The primary structure comprises 111 residues: Exocrine gland-secreted peptide 22 (111 aa).

An N-terminal signal peptide occupies residues 1 to 24 (MNSVPVMLFSISILLAAMLTEGRG).

It belongs to the exocrine gland-secreted peptide family. As to expression, expressed in acinar cells of the lacrimal gland from where it is secreted into tears. Not detected in a range of other tissues tested including other exocrine glands, internal organs and sensory epithelia.

The protein resides in the secreted. In terms of biological role, pheromone produced by juveniles which activates a small number of vomeronasal organ sensory neurons and exhibits a powerful inhibitory effect on adult male mating behavior. This chain is Exocrine gland-secreted peptide 22, found in Mus musculus (Mouse).